Here is a 98-residue protein sequence, read N- to C-terminus: MRTFLVTFVLVVVVGVISAYPSNPVEVEAEDFDAQDPDLQTFQDTFYEVPQVHSRQKRATCDLLSAFGVGHAACAAHCIGHGYRGGYCNSKAVCTCRR.

Positions 1–19 are cleaved as a signal peptide; it reads MRTFLVTFVLVVVVGVISA. The propeptide occupies 20–58; that stretch reads YPSNPVEVEAEDFDAQDPDLQTFQDTFYEVPQVHSRQKR. Disulfide bonds link Cys61-Cys88, Cys74-Cys94, and Cys78-Cys96.

As to expression, is synthesized by the fat body and eventually secreted into the hemolymph.

The protein localises to the secreted. Its function is as follows. Has antiparasitic activity against promastigote forms of L.major, and antibacterial activity against Gram-positive bacterium S.aureus. Has antifungal activity against the yeasts C.albicans and S.cerevisiae, but not C.glabrata. Has antifungal activity against filamentous fungi A.fumigatus, F.culmorum, F.oxysporum, N.crassa, T.viride and T.mentagrophytes, but not B.bassiana. This is Defensin from Phlebotomus duboscqi (Sandfly).